We begin with the raw amino-acid sequence, 645 residues long: Translation factor GUF1 homolog, mitochondrial (645 aa).

The tr-type G domain occupies 40-215; the sequence is EKIRNFGIVA…AIVERVPAPT (176 aa). Residues 49–56, 108–112, and 162–165 contribute to the GTP site; these read AHVDHGKS, DTPGH, and NKID.

It belongs to the TRAFAC class translation factor GTPase superfamily. Classic translation factor GTPase family. LepA subfamily.

The protein localises to the mitochondrion inner membrane. It catalyses the reaction GTP + H2O = GDP + phosphate + H(+). Its function is as follows. Promotes mitochondrial protein synthesis. May act as a fidelity factor of the translation reaction, by catalyzing a one-codon backward translocation of tRNAs on improperly translocated ribosomes. Binds to mitochondrial ribosomes in a GTP-dependent manner. The sequence is that of Translation factor GUF1 homolog, mitochondrial from Caenorhabditis briggsae.